Consider the following 282-residue polypeptide: D-alanine aminotransferase (282 aa).

Tyrosine 32 contributes to the substrate binding site. Arginine 51 serves as a coordination point for pyridoxal 5'-phosphate. 2 residues coordinate substrate: arginine 99 and histidine 101. Lysine 146 (proton acceptor) is an active-site residue. Lysine 146 is subject to N6-(pyridoxal phosphate)lysine. Glutamate 178 contacts pyridoxal 5'-phosphate.

This sequence belongs to the class-IV pyridoxal-phosphate-dependent aminotransferase family. Homodimer. Pyridoxal 5'-phosphate is required as a cofactor.

It catalyses the reaction D-alanine + 2-oxoglutarate = D-glutamate + pyruvate. Functionally, acts on the D-isomers of alanine, leucine, aspartate, glutamate, aminobutyrate, norvaline and asparagine. The enzyme transfers an amino group from a substrate D-amino acid to the pyridoxal phosphate cofactor to form pyridoxamine and an alpha-keto acid in the first half-reaction. The second half-reaction is the reverse of the first, transferring the amino group from the pyridoxamine to a second alpha-keto acid to form the product D-amino acid via a ping-pong mechanism. This is an important process in the formation of D-alanine and D-glutamate, which are essential bacterial cell wall components. This chain is D-alanine aminotransferase (dat), found in Staphylococcus haemolyticus.